An 80-amino-acid polypeptide reads, in one-letter code: Translation initiation factor IF-1, chloroplastic (80 aa).

In terms of domain architecture, S1-like spans 1–74; it reads MKEQKWIHEG…TRGRIIYRLR (74 aa).

It belongs to the IF-1 family. Component of the 30S ribosomal translation pre-initiation complex which assembles on the 30S ribosome in the order IF-2 and IF-3, IF-1 and N-formylmethionyl-tRNA(fMet); mRNA recruitment can occur at any time during PIC assembly.

It localises to the plastid. The protein resides in the chloroplast. Functionally, one of the essential components for the initiation of protein synthesis. Stabilizes the binding of IF-2 and IF-3 on the 30S subunit to which N-formylmethionyl-tRNA(fMet) subsequently binds. Helps modulate mRNA selection, yielding the 30S pre-initiation complex (PIC). Upon addition of the 50S ribosomal subunit IF-1, IF-2 and IF-3 are released leaving the mature 70S translation initiation complex. This is Translation initiation factor IF-1, chloroplastic from Illicium oligandrum (Star anise).